An 840-amino-acid polypeptide reads, in one-letter code: Radial spoke head 10 homolog B (840 aa).

Composition is skewed to basic and acidic residues over residues 1–16 (MVKEKKKADKKGDKSA) and 51–63 (QPKDPGVKREVKS). A disordered region spans residues 1–74 (MVKEKKKADK…SLPNEDTTQY (74 aa)). 10 MORN repeats span residues 86 to 108 (SYEGEKVRGLYEGEGFAIFQGGC), 109 to 131 (TYQGMFSEGLMHGQGTYIWADGL), 132 to 154 (KYEGDFVKNIPMNHGIFTWPDGS), 155 to 177 (TYEGEVVGGMRHGFGMFKCSTQP), 179 to 201 (SYIGHWCHGKRHGKGSIYYNQEG), 204 to 226 (WYEGDWIHNIRKGWGIRCYKSGN), 227 to 249 (IYEGQWENNVRHGEGRMRWLTTN), 251 to 273 (EYTGQWKHGVQNGLGTHTWFLKR), 284 to 306 (EYVGEFVNGYRHGHGKFYYASGA), and 307 to 329 (MYEGEWVSNKKHGMGRLTFKNGR). Residues 758 to 801 (KEKVKENRLHNEAMALQRKMENEELEARLNSLREEEAKRQDYEV) are a coiled coil. The disordered stretch occupies residues 810 to 840 (VDAPSSSFTPSPPKEDTVVSSKSITSKKKKK).

Interacts with RSPH6A. Does not appear to be part of the axonemal radial spoke complexes 1 or 2.

The protein resides in the cytoplasm. The protein localises to the cytoskeleton. Its subcellular location is the cilium axoneme. It is found in the cell projection. It localises to the cilium. The protein resides in the flagellum. Functionally, may function as part of the axonemal radial spoke complex 3 (RS3). Radial spoke complexes are important for ciliary motility. The polypeptide is Radial spoke head 10 homolog B (RSPH10B) (Bos taurus (Bovine)).